A 306-amino-acid chain; its full sequence is Bifunctional protein FolD (306 aa).

Residues G166–S168 and I232 contribute to the NADP(+) site.

This sequence belongs to the tetrahydrofolate dehydrogenase/cyclohydrolase family. Homodimer.

The enzyme catalyses (6R)-5,10-methylene-5,6,7,8-tetrahydrofolate + NADP(+) = (6R)-5,10-methenyltetrahydrofolate + NADPH. It carries out the reaction (6R)-5,10-methenyltetrahydrofolate + H2O = (6R)-10-formyltetrahydrofolate + H(+). It participates in one-carbon metabolism; tetrahydrofolate interconversion. In terms of biological role, catalyzes the oxidation of 5,10-methylenetetrahydrofolate to 5,10-methenyltetrahydrofolate and then the hydrolysis of 5,10-methenyltetrahydrofolate to 10-formyltetrahydrofolate. This chain is Bifunctional protein FolD, found in Methylorubrum extorquens (strain CM4 / NCIMB 13688) (Methylobacterium extorquens).